Here is a 578-residue protein sequence, read N- to C-terminus: ATP-dependent RNA helicase CHR1 (578 aa).

Residues Met-1 to Ile-95 are disordered. Composition is skewed to basic and acidic residues over residues Glu-44 to His-53 and Asn-78 to Glu-94. Positions Asp-131–Cys-159 match the Q motif motif. Positions Ile-162 to Ile-339 constitute a Helicase ATP-binding domain. Ala-175–Thr-182 contributes to the ATP binding site. The DEAD box motif lies at Asp-286–Asp-289. The region spanning Thr-350–Gly-514 is the Helicase C-terminal domain. Composition is skewed to basic and acidic residues over residues Ser-517 to Arg-531 and Glu-561 to Glu-578. Positions Ser-517–Glu-578 are disordered.

This sequence belongs to the DEAD box helicase family. DDX52/ROK1 subfamily. As to quaternary structure, interacts with the U3 snoRNA and is associated with the 90S and 40S pre-ribosomes.

It localises to the nucleus. The protein resides in the nucleolus. It carries out the reaction ATP + H2O = ADP + phosphate + H(+). Functionally, ATP-dependent RNA helicase involved in 40S ribosomal subunit biogenesis. Required for the processing and cleavage of 35S pre-rRNA at sites A0, A1, and A2, leading to mature 18S rRNA. This is ATP-dependent RNA helicase CHR1 (CHR1) from Candida albicans (strain SC5314 / ATCC MYA-2876) (Yeast).